A 667-amino-acid polypeptide reads, in one-letter code: Fermitin family homolog 3 (667 aa).

S8 is subject to Phosphoserine. Y11 carries the phosphotyrosine modification. The 330-residue stretch at 229-558 folds into the FERM domain; the sequence is WLDSSRCLMQ…SLPDFGISYV (330 aa). One can recognise a PH domain in the interval 354 to 457; the sequence is DHLRIFRIPR…WMAGCRLASK (104 aa). Phosphotyrosine is present on Y504. T591 bears the Phosphothreonine mark.

This sequence belongs to the kindlin family. As to quaternary structure, interacts with ITGB1, ITGB2 and ITGB3 (via cytoplasmic tails). As to expression, highly expressed in lymph node. Expressed in thymus, spleen and leukocytes. Weakly expressed in placenta, small intestine, stomach, testis and lung. Overexpressed in B-cell malignancies.

The protein resides in the cell projection. It is found in the podosome. Functionally, plays a central role in cell adhesion in hematopoietic cells. Acts by activating the integrin beta-1-3 (ITGB1, ITGB2 and ITGB3). Required for integrin-mediated platelet adhesion and leukocyte adhesion to endothelial cells. Required for activation of integrin beta-2 (ITGB2) in polymorphonuclear granulocytes (PMNs). Its function is as follows. Isoform 2 may act as a repressor of NF-kappa-B and apoptosis. The chain is Fermitin family homolog 3 (FERMT3) from Homo sapiens (Human).